The sequence spans 204 residues: MPVLNTLRRSLLILALACTLPSLAMDRNALLDQANVLLLPRERAIPQLELVDQNDQPFSTETLKGRWHILFFGFTACPDICPTTLSEMRRLFGQLPAETREQLQLVLITADPARDTPQQLKTYLSYYRAGFIGLTGNMEQLQRLSKALGLPFVPATETEGDYSVSHSGNLALVGPDGSLRGHIRAPLKLDGLQRVLPQILDNER.

Residues Cys-77, Cys-81, and His-166 each contribute to the Cu cation site.

It belongs to the SCO1/2 family.

The polypeptide is Putative copper-binding protein (scoP) (Stutzerimonas stutzeri (Pseudomonas stutzeri)).